The sequence spans 459 residues: Bifunctional protein GlmU (459 aa).

The segment at 1–229 is pyrophosphorylase; sequence MSNYAIILAA…FDESLGVNDR (229 aa). UDP-N-acetyl-alpha-D-glucosamine contacts are provided by residues 8 to 11, lysine 22, glutamine 72, and 77 to 78; these read LAAG and GT. Aspartate 102 is a Mg(2+) binding site. The UDP-N-acetyl-alpha-D-glucosamine site is built by glycine 139, glutamate 154, asparagine 169, and asparagine 227. Residue asparagine 227 coordinates Mg(2+). Residues 230-250 form a linker region; that stretch reads VALATAEKVMRHRIARQHMVN. Residues 251-459 are N-acetyltransferase; sequence GVTVVNPDSA…NKKPHHPSQK (209 aa). 2 residues coordinate UDP-N-acetyl-alpha-D-glucosamine: arginine 332 and lysine 350. The active-site Proton acceptor is the histidine 362. Residues tyrosine 365 and asparagine 376 each coordinate UDP-N-acetyl-alpha-D-glucosamine. Acetyl-CoA contacts are provided by residues alanine 379, 385-386, serine 404, alanine 422, and arginine 439; that span reads NY.

The protein in the N-terminal section; belongs to the N-acetylglucosamine-1-phosphate uridyltransferase family. This sequence in the C-terminal section; belongs to the transferase hexapeptide repeat family. Homotrimer. Mg(2+) is required as a cofactor.

Its subcellular location is the cytoplasm. It carries out the reaction alpha-D-glucosamine 1-phosphate + acetyl-CoA = N-acetyl-alpha-D-glucosamine 1-phosphate + CoA + H(+). The catalysed reaction is N-acetyl-alpha-D-glucosamine 1-phosphate + UTP + H(+) = UDP-N-acetyl-alpha-D-glucosamine + diphosphate. It functions in the pathway nucleotide-sugar biosynthesis; UDP-N-acetyl-alpha-D-glucosamine biosynthesis; N-acetyl-alpha-D-glucosamine 1-phosphate from alpha-D-glucosamine 6-phosphate (route II): step 2/2. The protein operates within nucleotide-sugar biosynthesis; UDP-N-acetyl-alpha-D-glucosamine biosynthesis; UDP-N-acetyl-alpha-D-glucosamine from N-acetyl-alpha-D-glucosamine 1-phosphate: step 1/1. It participates in bacterial outer membrane biogenesis; LPS lipid A biosynthesis. Its function is as follows. Catalyzes the last two sequential reactions in the de novo biosynthetic pathway for UDP-N-acetylglucosamine (UDP-GlcNAc). The C-terminal domain catalyzes the transfer of acetyl group from acetyl coenzyme A to glucosamine-1-phosphate (GlcN-1-P) to produce N-acetylglucosamine-1-phosphate (GlcNAc-1-P), which is converted into UDP-GlcNAc by the transfer of uridine 5-monophosphate (from uridine 5-triphosphate), a reaction catalyzed by the N-terminal domain. This chain is Bifunctional protein GlmU, found in Streptococcus agalactiae serotype III (strain NEM316).